The sequence spans 319 residues: Cytochrome c biogenesis protein CcsA (319 aa).

7 helical membrane-spanning segments follow: residues 9–29 (ILTH…LITL), 44–64 (GMIV…ASSG), 68–88 (LSNL…LHTI), 143–163 (MLLS…ILII), 223–243 (VISL…VWAN), 257–271 (TWAF…IYLH), and 286–306 (VASI…LLGI).

It belongs to the CcmF/CycK/Ccl1/NrfE/CcsA family. In terms of assembly, may interact with Ccs1.

The protein resides in the plastid. Its subcellular location is the chloroplast thylakoid membrane. Required during biogenesis of c-type cytochromes (cytochrome c6 and cytochrome f) at the step of heme attachment. The chain is Cytochrome c biogenesis protein CcsA from Agrostis stolonifera (Creeping bentgrass).